A 214-amino-acid polypeptide reads, in one-letter code: Holliday junction branch migration complex subunit RuvA (214 aa).

Positions 1–63 are domain I; sequence MISSLRGTVL…EDSLTLFGFP (63 aa). The interval 64-139 is domain II; that stretch reads GPDELRAFEL…KLFVTQPRTR (76 aa). Residues 139–143 form a flexible linker region; sequence RSASS. The tract at residues 144–214 is domain III; it reads AASTVTADVV…APAAAQAADR (71 aa).

This sequence belongs to the RuvA family. Homotetramer. Forms an RuvA(8)-RuvB(12)-Holliday junction (HJ) complex. HJ DNA is sandwiched between 2 RuvA tetramers; dsDNA enters through RuvA and exits via RuvB. An RuvB hexamer assembles on each DNA strand where it exits the tetramer. Each RuvB hexamer is contacted by two RuvA subunits (via domain III) on 2 adjacent RuvB subunits; this complex drives branch migration. In the full resolvosome a probable DNA-RuvA(4)-RuvB(12)-RuvC(2) complex forms which resolves the HJ.

The protein resides in the cytoplasm. In terms of biological role, the RuvA-RuvB-RuvC complex processes Holliday junction (HJ) DNA during genetic recombination and DNA repair, while the RuvA-RuvB complex plays an important role in the rescue of blocked DNA replication forks via replication fork reversal (RFR). RuvA specifically binds to HJ cruciform DNA, conferring on it an open structure. The RuvB hexamer acts as an ATP-dependent pump, pulling dsDNA into and through the RuvAB complex. HJ branch migration allows RuvC to scan DNA until it finds its consensus sequence, where it cleaves and resolves the cruciform DNA. This is Holliday junction branch migration complex subunit RuvA from Clavibacter sepedonicus (Clavibacter michiganensis subsp. sepedonicus).